The chain runs to 213 residues: Receptor-binding cancer antigen expressed on SiSo cells (213 aa).

Topologically, residues 1–6 (MAITQF) are extracellular. Residues 7–27 (RLFKFCTCLATVFSFLKRLIC) form a helical; Signal-anchor for type III membrane protein membrane-spanning segment. Topologically, residues 28 to 213 (RSGRGRKLSG…EQNKIGVKLS (186 aa)) are cytoplasmic. Ser36 is modified (phosphoserine). Thr41 is subject to Phosphothreonine. Position 94 is a phosphotyrosine (Tyr94). Residues 163–211 (EDAAWQAEEVLRQQKLADREKRAAEQQRKKMEKEAQRLMKKEQNKIGVK) adopt a coiled-coil conformation. Over residues 178-206 (LADREKRAAEQQRKKMEKEAQRLMKKEQN) the composition is skewed to basic and acidic residues. A disordered region spans residues 178–213 (LADREKRAAEQQRKKMEKEAQRLMKKEQNKIGVKLS).

As to quaternary structure, homodimer. In terms of tissue distribution, widely expressed. Expressed in ovary, testis, prostate, thymus, muscle and heart, but not in small intestine, colon, lymph nodes, or peripherical blood lymphocytes. The protein is not detected in any of the above organs.

The protein localises to the golgi apparatus membrane. In terms of biological role, may participate in suppression of cell proliferation and induces apoptotic cell death through activation of interleukin-1-beta converting enzyme (ICE)-like proteases. This chain is Receptor-binding cancer antigen expressed on SiSo cells (EBAG9), found in Homo sapiens (Human).